The primary structure comprises 464 residues: Cysteine--tRNA ligase (464 aa).

C29 is a binding site for Zn(2+). The 'HIGH' region motif lies at 31-41; that stretch reads PTVYDFAHIGN. Positions 224, 249, and 253 each coordinate Zn(2+). The 'KMSKS' region signature appears at 282-286; the sequence is KMSKS. K285 is an ATP binding site.

It belongs to the class-I aminoacyl-tRNA synthetase family. In terms of assembly, monomer. The cofactor is Zn(2+).

It is found in the cytoplasm. The catalysed reaction is tRNA(Cys) + L-cysteine + ATP = L-cysteinyl-tRNA(Cys) + AMP + diphosphate. The chain is Cysteine--tRNA ligase from Afipia carboxidovorans (strain ATCC 49405 / DSM 1227 / KCTC 32145 / OM5) (Oligotropha carboxidovorans).